We begin with the raw amino-acid sequence, 466 residues long: Amidase (466 aa).

Residues Lys79 and Ser148 each act as charge relay system in the active site. Positions 128–152 (YGRITPKSRNPRDPGRTPGGSSGGS) are disordered. Ser172 (acyl-ester intermediate) is an active-site residue.

This sequence belongs to the amidase family.

The enzyme catalyses a monocarboxylic acid amide + H2O = a monocarboxylate + NH4(+). This is Amidase from Pseudomonas putida (Arthrobacter siderocapsulatus).